The primary structure comprises 212 residues: Uridine kinase (212 aa).

Residue G13–T20 participates in ATP binding.

This sequence belongs to the uridine kinase family.

It is found in the cytoplasm. The catalysed reaction is uridine + ATP = UMP + ADP + H(+). It carries out the reaction cytidine + ATP = CMP + ADP + H(+). The protein operates within pyrimidine metabolism; CTP biosynthesis via salvage pathway; CTP from cytidine: step 1/3. It functions in the pathway pyrimidine metabolism; UMP biosynthesis via salvage pathway; UMP from uridine: step 1/1. The chain is Uridine kinase from Bacillus mycoides (strain KBAB4) (Bacillus weihenstephanensis).